The chain runs to 676 residues: Intraflagellar transport protein 81 homolog (676 aa).

Ser2 carries the N-acetylserine modification. Positions 2 to 121 (SDQIKFIMDS…LKKRAYLARF (120 aa)) are CH (calponin-homology)-like region. Thr61 is modified (phosphothreonine). 4 coiled-coil regions span residues 132–258 (LQDE…ADAK), 306–389 (HSDL…FDGT), 416–456 (QIIA…KGIS), and 490–622 (VKKL…REKQ).

This sequence belongs to the IFT81 family. As to quaternary structure, component of the IFT complex B, at least composed of IFT20, IFT22, IFT25, IFT27, IFT46, IFT52, TRAF3IP1/IFT54, IFT57, IFT74, IFT80, IFT81, and IFT88. Interacts with IFT74; the interaction is direct: within the IFT complex B, IFT74 and IFT81 mediate the transport of tubulin within the cilium. Interacts with tubulin; the interaction is direct. Interacts with IFT57 and IFT70B. Interacts with RABL2/RABL2A; binding is equal in the presence of GTP or GDP. Interacts with IFT88. Interacts (via the IFT74/IFT81 heterodimer) with RABL2B. Interacts with CFAP61. Highly expressed in testis, moderately in ovary, heart, liver, skeletal muscle, kidney and pancreas, low in prostate, brain, placenta and lung and not detected in spleen, thymus, small intestine and colon. Isoform CDV-1R is abundantly expressed in testis.

The protein localises to the cell projection. It localises to the cilium. It is found in the cytoplasm. The protein resides in the cytoskeleton. Its subcellular location is the cilium basal body. Functionally, component of the intraflagellar transport (IFT) complex B: together with IFT74, forms a tubulin-binding module that specifically mediates transport of tubulin within the cilium. Binds tubulin via its CH (calponin-homology)-like region. Required for ciliogenesis. Required for proper regulation of SHH signaling. Plays an important role during spermatogenesis by modulating the assembly and elongation of the sperm flagella. In Homo sapiens (Human), this protein is Intraflagellar transport protein 81 homolog (IFT81).